The sequence spans 506 residues: Sodium transporter HKT1 (506 aa).

Residues 1–19 lie on the Cytoplasmic side of the membrane; that stretch reads MDRVVAKIAKIRSQLTKLR. Residues 20-40 form a helical membrane-spanning segment; that stretch reads SLFFLYFIYFLFFSFLGFLAL. The Extracellular portion of the chain corresponds to 41–81; that stretch reads KITKPRTTSRPHDFDLFFTSVSAITVSSMSTVDMEVFSNTQ. Residues 82–102 form a helical membrane-spanning segment; sequence LIFLTILMFLGGEIFTSFLNL. The Cytoplasmic segment spans residues 103–159; sequence YVSYFTKFVFPHNKIRHILGSYNSDSSIEDRCDVETVTDYREGLIKIDERASKCLYS. Residues 160 to 180 traverse the membrane as a helical segment; it reads VVLSYHLVTNLVGSVLLLVYV. Over 181 to 232 the chain is Extracellular; it reads NFVKTARDVLSSKEISPLTFSVFTTVSTFANCGFVPTNENMIIFRKNSGLIW. The chain crosses the membrane as a helical span at residues 233-253; that stretch reads LLIPQVLMGNTLFPCFLVLLI. Over 254 to 286 the chain is Cytoplasmic; sequence WGLYKITKRDEYGYILKNHNKMGYSHLLSVRLC. Residues 287–307 form a helical membrane-spanning segment; that stretch reads VLLGVTVLGFLIIQLLFFCAF. At 308–348 the chain is on the extracellular side; that stretch reads EWTSESLEGMSSYEKLVGSLFQVVNSRHTGETIVDLSTLSP. The helical transmembrane segment at 349-369 threads the bilayer; it reads AILVLFILMMYLPPYTLFMPL. At 370–392 the chain is on the cytoplasmic side; that stretch reads TEQKTIEKEGGDDDSENGKKVKK. Residues 393–413 traverse the membrane as a helical segment; the sequence is SGLIVSQLSFLTICIFLISIT. Over 414–465 the chain is Extracellular; that stretch reads ERQNLQRDPINFNVLNITLEVISAYGNVGFTTGYSCERRVDISDGGCKDASY. N429 carries an N-linked (GlcNAc...) asparagine glycan. The helical transmembrane segment at 466–486 threads the bilayer; sequence GFAGRWSPMGKFVLIIVMFYG. Topologically, residues 487-506 are cytoplasmic; it reads RFKQFTAKSGRAWILYPSSS.

This sequence belongs to the TrkH potassium transport family. HKT (TC 2.A.38.3) subfamily. N-glycosylated. Not essential for functional expression and membrane targeting. Highly expressed in roots. Expressed in flowers, leaves and stems. Expressed in the vascular tissues of every organs. In roots, leaves and flower peduncles, it is only expressed in the phloem tissues. Not expressed in root peripheral cells.

The protein localises to the cell membrane. It carries out the reaction Na(+)(in) = Na(+)(out). Functionally, sodium transporter protein, which plays a central role in plant tolerance to salt. Upon prolongated exposure to high concentrations, Na(+) translocates from the roots to the transpiring leaves where it can increase to toxic level. Involved in Na(+) recirculation from shoots to roots, probably by mediating Na(+) loading into the phloem sap in shoots and unloading in roots, thereby removing large amounts of Na(+) from the shoot. Does not transport K(+) but regulates K(+) nutrient status via its ability to facilitate Na(+) homeostasis. Probably not involved in root uptake of Na(+). This is Sodium transporter HKT1 (HKT1) from Arabidopsis thaliana (Mouse-ear cress).